The following is a 119-amino-acid chain: Photosystem II extrinsic protein V (119 aa).

Residues C36, C39, and H40 each contribute to the heme c site.

Belongs to the cytochrome c family. PsbV subfamily. As to quaternary structure, PSII is composed of 1 copy each of membrane proteins PsbA, PsbB, PsbC, PsbD, PsbE, PsbF, PsbH, PsbI, PsbJ, PsbK, PsbL, PsbM, PsbT, PsbX, PsbY, PsbZ, Psb30/Ycf12, peripheral proteins PsbO, CyanoQ (PsbQ), PsbU, PsbV and a large number of cofactors. It forms dimeric complexes. Heme c is required as a cofactor.

Its subcellular location is the cellular thylakoid membrane. Its function is as follows. One of the extrinsic, lumenal subunits of photosystem II (PSII). PSII is a light-driven water plastoquinone oxidoreductase, using light energy to abstract electrons from H(2)O, generating a proton gradient subsequently used for ATP formation. The extrinsic proteins stabilize the structure of photosystem II oxygen-evolving complex (OEC), the ion environment of oxygen evolution and protect the OEC against heat-induced inactivation. Low-potential cytochrome c that plays a role in the OEC of PSII. The sequence is that of Photosystem II extrinsic protein V (psbV) from Aphanizomenon flos-aquae.